Consider the following 349-residue polypeptide: Methylthioribose-1-phosphate isomerase (349 aa).

Substrate contacts are provided by residues 51–53 (RGA), arginine 94, and glutamine 199. The active-site Proton donor is aspartate 240. 250-251 (NK) is a binding site for substrate.

It belongs to the EIF-2B alpha/beta/delta subunits family. MtnA subfamily. As to quaternary structure, homodimer.

The catalysed reaction is 5-(methylsulfanyl)-alpha-D-ribose 1-phosphate = 5-(methylsulfanyl)-D-ribulose 1-phosphate. The protein operates within amino-acid biosynthesis; L-methionine biosynthesis via salvage pathway; L-methionine from S-methyl-5-thio-alpha-D-ribose 1-phosphate: step 1/6. Its function is as follows. Catalyzes the interconversion of methylthioribose-1-phosphate (MTR-1-P) into methylthioribulose-1-phosphate (MTRu-1-P). The polypeptide is Methylthioribose-1-phosphate isomerase (Bacillus mycoides (strain KBAB4) (Bacillus weihenstephanensis)).